We begin with the raw amino-acid sequence, 244 residues long: Probable transcriptional regulatory protein Aasi_0624 (244 aa).

It belongs to the TACO1 family.

The protein localises to the cytoplasm. The polypeptide is Probable transcriptional regulatory protein Aasi_0624 (Amoebophilus asiaticus (strain 5a2)).